We begin with the raw amino-acid sequence, 200 residues long: Oligoribonuclease (200 aa).

Residues 20-183 enclose the Exonuclease domain; sequence LVWLDMEMTG…ADIHESIDEL (164 aa). The active site involves Tyr-141.

This sequence belongs to the oligoribonuclease family.

Its subcellular location is the cytoplasm. 3'-to-5' exoribonuclease specific for small oligoribonucleotides. The chain is Oligoribonuclease from Burkholderia vietnamiensis (strain G4 / LMG 22486) (Burkholderia cepacia (strain R1808)).